Here is a 539-residue protein sequence, read N- to C-terminus: Phosphoenolpyruvate carboxykinase (ATP) (539 aa).

Positions 59, 200, and 206 each coordinate substrate. ATP-binding positions include lysine 206, histidine 225, and 242-250; that span reads GLSGTGKTT. 2 residues coordinate Mn(2+): lysine 206 and histidine 225. Aspartate 263 contributes to the Mn(2+) binding site. ATP-binding positions include glutamate 291, arginine 327, 447 to 448, and threonine 453; that span reads RI. Residue arginine 327 participates in substrate binding.

Belongs to the phosphoenolpyruvate carboxykinase (ATP) family. Mn(2+) serves as cofactor.

The protein localises to the cytoplasm. It carries out the reaction oxaloacetate + ATP = phosphoenolpyruvate + ADP + CO2. Its pathway is carbohydrate biosynthesis; gluconeogenesis. In terms of biological role, involved in the gluconeogenesis. Catalyzes the conversion of oxaloacetate (OAA) to phosphoenolpyruvate (PEP) through direct phosphoryl transfer between the nucleoside triphosphate and OAA. This chain is Phosphoenolpyruvate carboxykinase (ATP), found in Selenomonas ruminantium.